The sequence spans 393 residues: Major outer membrane protein P.IA (393 aa).

Residues 1 to 19 (MRKKLTALVLSALPLAAVA) form the signal peptide.

The protein belongs to the Gram-negative porin family. In terms of assembly, homotrimer.

It localises to the cell outer membrane. Its function is as follows. Serves as a slightly cation selective porin. Major antigen on the gonococcal cell surface and it may have pathogenic properties in addition to its porin activity. The polypeptide is Major outer membrane protein P.IA (porA) (Neisseria meningitidis serogroup C).